The primary structure comprises 174 residues: Gamma-crystallin D (174 aa).

Beta/gamma crystallin 'Greek key' domains lie at 2–40 (GKIT…RVDS) and 41–83 (GCWM…RIIP). The tract at residues 84–87 (YSGS) is connecting peptide. Beta/gamma crystallin 'Greek key' domains follow at residues 88-128 (HKMR…NVLD) and 129-171 (GCWI…RRVI).

This sequence belongs to the beta/gamma-crystallin family. In terms of assembly, monomer.

Functionally, crystallins are the dominant structural components of the vertebrate eye lens. In Macropus fuliginosus (Western gray kangaroo), this protein is Gamma-crystallin D (CRYGD).